A 65-amino-acid chain; its full sequence is DNA gyrase inhibitor YacG (65 aa).

Residues Cys9, Cys12, Cys28, and Cys32 each contribute to the Zn(2+) site. Positions 43 to 65 (EEKRIPSQSENSDSDDWSGQPEQ) are disordered.

The protein belongs to the DNA gyrase inhibitor YacG family. In terms of assembly, interacts with GyrB. The cofactor is Zn(2+).

Its function is as follows. Inhibits all the catalytic activities of DNA gyrase by preventing its interaction with DNA. Acts by binding directly to the C-terminal domain of GyrB, which probably disrupts DNA binding by the gyrase. This Photorhabdus laumondii subsp. laumondii (strain DSM 15139 / CIP 105565 / TT01) (Photorhabdus luminescens subsp. laumondii) protein is DNA gyrase inhibitor YacG.